A 348-amino-acid chain; its full sequence is Phenylalanine--tRNA ligase alpha subunit (348 aa).

Glutamate 262 provides a ligand contact to Mg(2+).

Belongs to the class-II aminoacyl-tRNA synthetase family. Phe-tRNA synthetase alpha subunit type 1 subfamily. Tetramer of two alpha and two beta subunits. Requires Mg(2+) as cofactor.

The protein localises to the cytoplasm. The enzyme catalyses tRNA(Phe) + L-phenylalanine + ATP = L-phenylalanyl-tRNA(Phe) + AMP + diphosphate + H(+). This chain is Phenylalanine--tRNA ligase alpha subunit, found in Streptococcus pneumoniae serotype 2 (strain D39 / NCTC 7466).